A 687-amino-acid polypeptide reads, in one-letter code: Sphingoid long chain base kinase 5 (687 aa).

Residues 1-20 (MTLKPSKRRKGRSRHSRKKQ) form a disordered region. S-palmitoyl cysteine; by AKR1 attachment occurs at residues Cys91 and Cys94. Residues 101–116 (IDRSETSTTDTSKDDL) are compositionally biased toward basic and acidic residues. Disordered regions lie at residues 101–130 (IDRSETSTTDTSKDDLSANPKLHYPSVNGQ) and 180–207 (DELESSQKKERKGNSLSRGSNSSSSLLT). The segment covering 193-207 (NSLSRGSNSSSSLLT) has biased composition (low complexity). Positions 266–405 (RRNKSIFVII…IDLMCCSQPS (140 aa)) constitute a DAGKc domain. ATP is bound by residues 276–278 (NPF) and Thr308. Position 333–336 (333–336 (SGDG)) interacts with substrate. Asp335 (proton donor/acceptor) is an active-site residue. ATP-binding positions include Glu340, 366 to 368 (GSG), Arg434, and Arg440. Over residues 506 to 524 (EYETENEDEDEDADADDED) the composition is skewed to acidic residues. Positions 506–525 (EYETENEDEDEDADADDEDS) are disordered. 652-654 (DGE) lines the ATP pocket.

The protein resides in the golgi apparatus membrane. It catalyses the reaction (4R)-hydroxysphinganine + ATP = (4R)-hydroxysphinganine 1-phosphate + ADP + H(+). The enzyme catalyses a sphingoid base + ATP = a sphingoid 1-phosphate + ADP + H(+). The catalysed reaction is sphinganine + ATP = sphinganine 1-phosphate + ADP + H(+). Functionally, catalyzes the phosphorylation of the sphingoid long chain bases dihydrosphingosine (DHS or sphinganine) and phytosphingosine (PHS) to form dihydrosphingosine 1-phosphate (DHS-1P) and phytosphingosine 1-phosphate (PHS-1P) respectively. Redundant to LCB4, is only responsible for few percent of the total activity. Involved in the biosynthesis of sphingolipids and ceramides. Involved in heat-induced transient cell cycle arrest. Accumulation of phosphorylated sphingoid long chain bases (LCBPs) stimulates calcium influx and activates calcineurin signaling. Involved in heat-stress resistance. The polypeptide is Sphingoid long chain base kinase 5 (LCB5) (Saccharomyces cerevisiae (strain ATCC 204508 / S288c) (Baker's yeast)).